The chain runs to 476 residues: Eukaryotic translation initiation factor 3 subunit L (476 aa).

The PCI domain maps to 257–452 (DAIRMFSHIL…DLDYALEKDL (196 aa)).

The protein belongs to the eIF-3 subunit L family. In terms of assembly, component of the eukaryotic translation initiation factor 3 (eIF-3) complex.

The protein localises to the cytoplasm. Component of the eukaryotic translation initiation factor 3 (eIF-3) complex, which is involved in protein synthesis of a specialized repertoire of mRNAs and, together with other initiation factors, stimulates binding of mRNA and methionyl-tRNAi to the 40S ribosome. The eIF-3 complex specifically targets and initiates translation of a subset of mRNAs involved in cell proliferation. The chain is Eukaryotic translation initiation factor 3 subunit L from Aspergillus terreus (strain NIH 2624 / FGSC A1156).